The sequence spans 356 residues: Guanine nucleotide-binding protein alpha-17 subunit (356 aa).

Gly2 carries the N-myristoyl glycine lipid modification. Cys4 is lipidated: S-palmitoyl cysteine. Residues 32 to 356 (SIVKLLLLGA…QKNLQKAGMM (325 aa)) form the G-alpha domain. The tract at residues 35–48 (KLLLLGAGECGKST) is G1 motif. GTP-binding positions include 40–47 (GAGECGKS), 177–183 (LYSRVAT), 202–206 (DVGGQ), 271–274 (NKKD), and Ala328. 2 residues coordinate Mg(2+): Ser47 and Thr183. The segment at 175-183 (DILYSRVAT) is G2 motif. The segment at 198-207 (FRVFDVGGQR) is G3 motif. Residues 267–274 (ILFMNKKD) are G4 motif. Positions 326 to 331 (TCATDT) are G5 motif.

Belongs to the G-alpha family. In terms of assembly, g proteins are composed of 3 units; alpha, beta and gamma. The alpha chain contains the guanine nucleotide binding site. In terms of tissue distribution, expressed in sensory neurons in the head and tail. Expressed in amphid AWC neurons, to a lesser extent in AWB and weakly in AWA, ASH and ADF neurons (head sensory neurons). Expressed in phasmid PHA and PHB neurons (tail sensory neurons).

Its subcellular location is the cell projection. It is found in the cilium. The protein resides in the dendrite. Functionally, guanine nucleotide-binding proteins (G proteins) are involved as modulators or transducers in various transmembrane signaling systems. This specific G-alpha subunit plays an important role in olfaction and in cilia morphogenesis. Involved in chemotactic responses to attractants diacetyl, pyrazine, 2,4,5-trimethylthiazole, benzaldehyde, isoamyl alcohol, butanone and 2,3-pentanedione. Displays a redundant function with gpa-3 in chemotactic responses. Plays a role in the avoidance response to the noxious chemical quinine in ASH sensory neurons. Involved in avoidance responses to copper, sodium dodecyl sulfate and linoleic acid. Involved in osmotic avoidance and mechanosensory responses. Involved in specifying fan-like morphology of cilia of head sensory neurons AWC. Plays a role in the detection of preferred food sources by mediating the recognition of food odors in olfactory sensory neurons. In Caenorhabditis elegans, this protein is Guanine nucleotide-binding protein alpha-17 subunit.